The primary structure comprises 121 residues: Small ribosomal subunit protein uS13 (121 aa).

A disordered region spans residues 95–121 (GLPVRGQKTKTNARTRKGKRKTVGAKS).

Belongs to the universal ribosomal protein uS13 family. In terms of assembly, part of the 30S ribosomal subunit. Forms a loose heterodimer with protein S19. Forms two bridges to the 50S subunit in the 70S ribosome.

Functionally, located at the top of the head of the 30S subunit, it contacts several helices of the 16S rRNA. In the 70S ribosome it contacts the 23S rRNA (bridge B1a) and protein L5 of the 50S subunit (bridge B1b), connecting the 2 subunits; these bridges are implicated in subunit movement. Contacts the tRNAs in the A and P-sites. This is Small ribosomal subunit protein uS13 from Campylobacter jejuni subsp. jejuni serotype O:23/36 (strain 81-176).